A 285-amino-acid chain; its full sequence is Ribosomal RNA small subunit methyltransferase A (285 aa).

Residues His27, Leu29, Gly54, Glu75, Asp100, and Asn120 each contribute to the S-adenosyl-L-methionine site.

The protein belongs to the class I-like SAM-binding methyltransferase superfamily. rRNA adenine N(6)-methyltransferase family. RsmA subfamily.

The protein localises to the cytoplasm. It catalyses the reaction adenosine(1518)/adenosine(1519) in 16S rRNA + 4 S-adenosyl-L-methionine = N(6)-dimethyladenosine(1518)/N(6)-dimethyladenosine(1519) in 16S rRNA + 4 S-adenosyl-L-homocysteine + 4 H(+). In terms of biological role, specifically dimethylates two adjacent adenosines (A1518 and A1519) in the loop of a conserved hairpin near the 3'-end of 16S rRNA in the 30S particle. May play a critical role in biogenesis of 30S subunits. This is Ribosomal RNA small subunit methyltransferase A from Phenylobacterium zucineum (strain HLK1).